The primary structure comprises 126 residues: Nascent polypeptide-associated complex protein (126 aa).

The 68-residue stretch at 10–77 (PRMMKQMQKM…AKKVAKAEEK (68 aa)) folds into the NAC-A/B domain.

The protein belongs to the NAC-alpha family. Homodimer. Interacts with the ribosome. Binds ribosomal RNA.

In terms of biological role, contacts the emerging nascent chain on the ribosome. The protein is Nascent polypeptide-associated complex protein of Methanococcus maripaludis (strain C6 / ATCC BAA-1332).